The sequence spans 137 residues: MRTLGVDLGRVRIGLAVADEILRTARAVTTVVRRGEAEDLAAIAEVARDYEVTRAVVGLPLNMDGTEGPSARLARGFAPRLEAALGVPVELFDERLSSFEAESRLRARGVSARDQRGQVDAEAAAVILQGWLDRRAP.

The protein belongs to the YqgF nuclease family.

It is found in the cytoplasm. In terms of biological role, could be a nuclease involved in processing of the 5'-end of pre-16S rRNA. This chain is Putative pre-16S rRNA nuclease, found in Anaeromyxobacter dehalogenans (strain 2CP-C).